The primary structure comprises 278 residues: Methyltransferase GfsG (278 aa).

S-adenosyl-L-methionine is bound by residues Gln105 and 128 to 129; that span reads DA. Residue Glu146 is the Proton acceptor of the active site. His150 provides a ligand contact to S-adenosyl-L-methionine.

This sequence belongs to the methyltransferase superfamily.

Its pathway is antibiotic biosynthesis. Functionally, methylase required for synthesis of the 16-membered macrolide antibiotics FD-891 and FD-892. In vitro uses S-adenosyl-L-methionine to methylate a number of biosynthetic intermediates in the synthesis of FD-891. The chain is Methyltransferase GfsG from Streptomyces halstedii.